The following is a 146-amino-acid chain: Ribosome maturation factor RimP (146 aa).

This sequence belongs to the RimP family.

It localises to the cytoplasm. Functionally, required for maturation of 30S ribosomal subunits. This Helicobacter pylori (strain P12) protein is Ribosome maturation factor RimP.